We begin with the raw amino-acid sequence, 216 residues long: Adenylate kinase (216 aa).

ATP is bound at residue 10–15 (GAGKGT). The NMP stretch occupies residues 30-59 (STGDIFRKNISENTPLGIEAKGYIDNGQLV). AMP is bound by residues Thr-31, Arg-36, 57-59 (QLV), 85-88 (GFPR), and Gln-92. Positions 126 to 163 (GRRVCPSCGASYHVKFNPPTNEGKCDLCGSEVIQRKDD) are LID. Arg-127 contacts ATP. Zn(2+) is bound by residues Cys-130 and Cys-133. Residue 136–137 (SY) coordinates ATP. Zn(2+) contacts are provided by Cys-150 and Cys-153. Arg-160 and Arg-171 together coordinate AMP. ATP is bound at residue Lys-199.

It belongs to the adenylate kinase family. Monomer.

It is found in the cytoplasm. It carries out the reaction AMP + ATP = 2 ADP. It participates in purine metabolism; AMP biosynthesis via salvage pathway; AMP from ADP: step 1/1. Catalyzes the reversible transfer of the terminal phosphate group between ATP and AMP. Plays an important role in cellular energy homeostasis and in adenine nucleotide metabolism. In Clostridium beijerinckii (strain ATCC 51743 / NCIMB 8052) (Clostridium acetobutylicum), this protein is Adenylate kinase.